The sequence spans 32 residues: Ranatuerin-2La (32 aa).

Residues Cys-27 and Cys-32 are joined by a disulfide bond.

Expressed by the skin glands.

Its subcellular location is the secreted. Functionally, antibacterial activity against Gram-positive bacterium S.aureus and Gram-negative bacterium E.coli. Weak activity against C.albicans. The sequence is that of Ranatuerin-2La from Rana luteiventris (Columbia spotted frog).